Here is a 915-residue protein sequence, read N- to C-terminus: MANINLKEITLIVGVVTACYWNSLFCGFVFDDVSAILDNKDLHPSTPLKTLFQNDFWGTPMSEERSHKSYRPLTVLTFRLNYLLSELKPMSYHLLNMIFHAVVSVIFLKVCKLFLDNKSSVIASLLFAVHPIHTEAVTGVVGRAELLSSIFFLAAFLSYTRSKGPDNSIIWTPIALTVFLVAVATLCKEQGITVVGICCVYEVFIAQGYTLPLLCTTAGQFLRGKGSIPFSMLQTLVKLIVLMFSTLLLVVIRVQVIQSQLPVFTRFDNPAAVSPTPTRQLTFNYLLPVNAWLLLNPSELCCDWTMGTIPLIESLLDIRNLATFTFFCFLGMLGVFSIRYSGDSSKTVLMALCLMALPFIPASNLFFPVGFVVAERVLYVPSMGFCILVAHGWQKISTKSVFKKLSWICLSMVILTHSLKTFHRNWDWESEYTLFMSALKVNKNNAKLWNNVGHALENEKNFERALKYFLQATHVQPDDIGAHMNVGRTYKNLNRTKEAEESYMMAKSLMPQIIPGKKYAARIAPNHLNVYINLANLIRANESRLEEADQLYRQAISMRPDFKQAYISRGELLLKMNKPLKAKEAYLKALELDRNNADLWYNLAIVHIELKEPNEALKKNFNRALELNPKHKLALFNSAIVMQESGEVKLRPEARKRLLSYINEEPLDANGYFNLGMLAMDDKKDNEAEIWMKKAIKLQADFRSALFNLALLYSQTAKELKALPILEELLRYYPDHIKGLILKGDILMNQKKDILGAKKCFERILEMDPSNVQGKHNLCVVYFEEKDLLKAERCLLETLALAPHEEYIQRHLNIVRDKISSSSFIEPIFPTSKISSVEGKKIPTESVKEIRGESRQTQIVKTSDNKSQSKSNKQLGKNGDEETPHKTTKDIKEIEKKRVAALKRLEEIERILNGE.

Residues 1 to 8 (MANINLKE) are Cytoplasmic-facing. The helical transmembrane segment at 9 to 29 (ITLIVGVVTACYWNSLFCGFV) threads the bilayer. The Extracellular portion of the chain corresponds to 30–93 (FDDVSAILDN…LSELKPMSYH (64 aa)). Residues 94–114 (LLNMIFHAVVSVIFLKVCKLF) form a helical membrane-spanning segment. Topologically, residues 115 to 120 (LDNKSS) are cytoplasmic. The next 2 helical transmembrane spans lie at 121–139 (VIAS…AVTG) and 140–158 (VVGR…AFLS). Residues 159–166 (YTRSKGPD) lie on the Cytoplasmic side of the membrane. A helical transmembrane segment spans residues 167 to 187 (NSIIWTPIALTVFLVAVATLC). Topologically, residues 188-193 (KEQGIT) are extracellular. The helical transmembrane segment at 194–214 (VVGICCVYEVFIAQGYTLPLL) threads the bilayer. Topologically, residues 215-231 (CTTAGQFLRGKGSIPFS) are cytoplasmic. Residues 232–252 (MLQTLVKLIVLMFSTLLLVVI) traverse the membrane as a helical segment. At 253-317 (RVQVIQSQLP…TIPLIESLLD (65 aa)) the chain is on the extracellular side. Residues 318–338 (IRNLATFTFFCFLGMLGVFSI) form a helical membrane-spanning segment. The Cytoplasmic portion of the chain corresponds to 339-353 (RYSGDSSKTVLMALC). Residues 354 to 374 (LMALPFIPASNLFFPVGFVVA) form a helical membrane-spanning segment. At 375–376 (ER) the chain is on the extracellular side. A helical membrane pass occupies residues 377-397 (VLYVPSMGFCILVAHGWQKIS). At 398-404 (TKSVFKK) the chain is on the cytoplasmic side. Residues 405-423 (LSWICLSMVILTHSLKTFH) form a helical membrane-spanning segment. At 424–915 (RNWDWESEYT…EEIERILNGE (492 aa)) the chain is on the extracellular side. 9 TPR repeats span residues 446–479 (AKLW…QPDD), 480–513 (IGAH…MPQI), 529–562 (NVYI…RPDF), 563–596 (KQAY…DRNN), 597–631 (ADLW…NPKH), 669–702 (ANGY…QADF), 703–736 (RSAL…YPDH), 738–771 (KGLI…DPSN), and 772–805 (VQGK…APHE). Residue Asn-494 is glycosylated (N-linked (GlcNAc...) asparagine). Tyr-503 carries the phosphotyrosine modification. An N-linked (GlcNAc...) asparagine glycan is attached at Asn-541. Residues 848-892 (KEIRGESRQTQIVKTSDNKSQSKSNKQLGKNGDEETPHKTTKDIK) form a disordered region. Asn-865 carries N-linked (GlcNAc...) asparagine glycosylation. Residues 865 to 874 (NKSQSKSNKQ) show a composition bias toward low complexity. The segment covering 878–892 (NGDEETPHKTTKDIK) has biased composition (basic and acidic residues).

This sequence belongs to the TMTC family.

It localises to the membrane. It is found in the endoplasmic reticulum. It carries out the reaction a di-trans,poly-cis-dolichyl beta-D-mannosyl phosphate + L-seryl-[protein] = 3-O-(alpha-D-mannosyl)-L-seryl-[protein] + a di-trans,poly-cis-dolichyl phosphate + H(+). It catalyses the reaction a di-trans,poly-cis-dolichyl beta-D-mannosyl phosphate + L-threonyl-[protein] = 3-O-(alpha-D-mannosyl)-L-threonyl-[protein] + a di-trans,poly-cis-dolichyl phosphate + H(+). It participates in protein modification; protein glycosylation. Its function is as follows. Transfers mannosyl residues to the hydroxyl group of serine or threonine residues. The 4 members of the TMTC family are O-mannosyl-transferases dedicated primarily to the cadherin superfamily, each member seems to have a distinct role in decorating the cadherin domains with O-linked mannose glycans at specific regions. Also acts as O-mannosyl-transferase on other proteins such as PDIA3. Involved in the positive regulation of proteasomal protein degradation in the endoplasmic reticulum (ER), and the control of ER stress response. The protein is Protein O-mannosyl-transferase TMTC3 of Homo sapiens (Human).